Consider the following 96-residue polypeptide: Putative pterin-4-alpha-carbinolamine dehydratase (96 aa).

Belongs to the pterin-4-alpha-carbinolamine dehydratase family.

It catalyses the reaction (4aS,6R)-4a-hydroxy-L-erythro-5,6,7,8-tetrahydrobiopterin = (6R)-L-erythro-6,7-dihydrobiopterin + H2O. The chain is Putative pterin-4-alpha-carbinolamine dehydratase from Prochlorococcus marinus (strain MIT 9301).